The chain runs to 595 residues: Glutamyl-tRNA(Gln) amidotransferase subunit B, mitochondrial (595 aa).

The transit peptide at 1 to 72 (MPRLWYSRYL…RAKSQSRNGR (72 aa)) directs the protein to the mitochondrion.

Belongs to the GatB/GatE family. GatB subfamily. Subunit of the heterotrimeric GatCAB amidotransferase (AdT) complex, composed of A, B and C subunits.

The protein localises to the mitochondrion. It catalyses the reaction L-glutamyl-tRNA(Gln) + L-glutamine + ATP + H2O = L-glutaminyl-tRNA(Gln) + L-glutamate + ADP + phosphate + H(+). Functionally, allows the formation of correctly charged Gln-tRNA(Gln) through the transamidation of misacylated Glu-tRNA(Gln) in the mitochondria. The reaction takes place in the presence of glutamine and ATP through an activated gamma-phospho-Glu-tRNA(Gln). This chain is Glutamyl-tRNA(Gln) amidotransferase subunit B, mitochondrial, found in Talaromyces marneffei (strain ATCC 18224 / CBS 334.59 / QM 7333) (Penicillium marneffei).